Consider the following 367-residue polypeptide: Glutamate 5-kinase (367 aa).

Lysine 9 serves as a coordination point for ATP. Substrate contacts are provided by serine 49, aspartate 136, and asparagine 148. Residues 168–169 and 210–216 each bind ATP; these read TD and TGGMKSK. One can recognise a PUA domain in the interval 276–350; the sequence is SGQIEIDAGA…GMQSQHIQAR (75 aa).

The protein belongs to the glutamate 5-kinase family.

It is found in the cytoplasm. The catalysed reaction is L-glutamate + ATP = L-glutamyl 5-phosphate + ADP. It functions in the pathway amino-acid biosynthesis; L-proline biosynthesis; L-glutamate 5-semialdehyde from L-glutamate: step 1/2. Catalyzes the transfer of a phosphate group to glutamate to form L-glutamate 5-phosphate. This chain is Glutamate 5-kinase, found in Bacillus cereus (strain ZK / E33L).